The primary structure comprises 110 residues: MHVKTGDEVLIITGKDRGKRGKIKESRPKEQRVIVEGLNIVKRHMKPRGPTRPGGIIEMEAPIHVSNVMLICPKCGRASRTGHRFLEETDHKGRPKKVRYCKACDAVIDE.

The protein belongs to the universal ribosomal protein uL24 family. As to quaternary structure, part of the 50S ribosomal subunit.

In terms of biological role, one of two assembly initiator proteins, it binds directly to the 5'-end of the 23S rRNA, where it nucleates assembly of the 50S subunit. One of the proteins that surrounds the polypeptide exit tunnel on the outside of the subunit. This is Large ribosomal subunit protein uL24 from Roseiflexus castenholzii (strain DSM 13941 / HLO8).